We begin with the raw amino-acid sequence, 618 residues long: Chaperone protein HtpG (618 aa).

Positions 1–340 (MATKHQFQTE…SEDLPLNVSR (340 aa)) are a; substrate-binding. The b stretch occupies residues 341–545 (EILQQNKILA…KEDNNPMMAN (205 aa)). A c region spans residues 546–618 (LMAQMGQKVP…ELNSLLLQSL (73 aa)).

The protein belongs to the heat shock protein 90 family. Homodimer.

Its subcellular location is the cytoplasm. Functionally, molecular chaperone. Has ATPase activity. The chain is Chaperone protein HtpG from Helicobacter hepaticus (strain ATCC 51449 / 3B1).